We begin with the raw amino-acid sequence, 469 residues long: Ribosomal protein uS12 methylthiotransferase RimO (469 aa).

In terms of domain architecture, MTTase N-terminal spans 34 to 144; that stretch reads NKIGFVSLGC…VLEHVHQFAP (111 aa). Positions 43, 79, 108, 176, 180, and 183 each coordinate [4Fe-4S] cluster. The region spanning 162 to 399 is the Radical SAM core domain; the sequence is LTPKHYAYLK…MLVQQEISAA (238 aa). Residues 402 to 468 form the TRAM domain; that stretch reads QKRIGSTMKV…EYDLWGSLVR (67 aa).

This sequence belongs to the methylthiotransferase family. RimO subfamily. It depends on [4Fe-4S] cluster as a cofactor.

The protein resides in the cytoplasm. It catalyses the reaction L-aspartate(89)-[ribosomal protein uS12]-hydrogen + (sulfur carrier)-SH + AH2 + 2 S-adenosyl-L-methionine = 3-methylsulfanyl-L-aspartate(89)-[ribosomal protein uS12]-hydrogen + (sulfur carrier)-H + 5'-deoxyadenosine + L-methionine + A + S-adenosyl-L-homocysteine + 2 H(+). Its function is as follows. Catalyzes the methylthiolation of an aspartic acid residue of ribosomal protein uS12. This Vibrio vulnificus (strain YJ016) protein is Ribosomal protein uS12 methylthiotransferase RimO.